Reading from the N-terminus, the 896-residue chain is Protein translocase subunit SecA (896 aa).

Residues glutamine 87, 105 to 109, and aspartate 507 contribute to the ATP site; that span reads GEGKT. The disordered stretch occupies residues 853-879; sequence ESLSENDEASETQTFRRQEKKIGRNDP. Over residues 866–876 the composition is skewed to basic and acidic residues; sequence TFRRQEKKIGR. Residues cysteine 880, cysteine 882, cysteine 891, and histidine 892 each coordinate Zn(2+).

This sequence belongs to the SecA family. Monomer and homodimer. Part of the essential Sec protein translocation apparatus which comprises SecA, SecYEG and auxiliary proteins SecDF-YajC and YidC. Requires Zn(2+) as cofactor.

The protein resides in the cell inner membrane. It is found in the cytoplasm. It carries out the reaction ATP + H2O + cellular proteinSide 1 = ADP + phosphate + cellular proteinSide 2.. Functionally, part of the Sec protein translocase complex. Interacts with the SecYEG preprotein conducting channel. Has a central role in coupling the hydrolysis of ATP to the transfer of proteins into and across the cell membrane, serving both as a receptor for the preprotein-SecB complex and as an ATP-driven molecular motor driving the stepwise translocation of polypeptide chains across the membrane. This is Protein translocase subunit SecA from Legionella pneumophila (strain Corby).